The sequence spans 402 residues: Phosphoglycerate kinase (402 aa).

Substrate contacts are provided by residues 24-26 (DFN), R40, 63-66 (HFGR), R122, and R155. ATP-binding positions include K206, G297, E328, and 358–361 (GGDS).

Belongs to the phosphoglycerate kinase family. As to quaternary structure, monomer.

The protein localises to the cytoplasm. It carries out the reaction (2R)-3-phosphoglycerate + ATP = (2R)-3-phospho-glyceroyl phosphate + ADP. The protein operates within carbohydrate degradation; glycolysis; pyruvate from D-glyceraldehyde 3-phosphate: step 2/5. The chain is Phosphoglycerate kinase from Prochlorococcus marinus (strain MIT 9515).